The sequence spans 80 residues: Small ribosomal subunit protein uS17 (80 aa).

The protein belongs to the universal ribosomal protein uS17 family. In terms of assembly, part of the 30S ribosomal subunit.

Functionally, one of the primary rRNA binding proteins, it binds specifically to the 5'-end of 16S ribosomal RNA. The polypeptide is Small ribosomal subunit protein uS17 (Cereibacter sphaeroides (strain ATCC 17029 / ATH 2.4.9) (Rhodobacter sphaeroides)).